A 221-amino-acid chain; its full sequence is Beta-phosphoglucomutase (221 aa).

Aspartate 8 functions as the Nucleophile in the catalytic mechanism. Aspartate 8 and aspartate 10 together coordinate Mg(2+). Position 8 is a 4-aspartylphosphate (aspartate 8). The active-site Proton donor/acceptor is aspartate 10. Residues aspartate 10, glycine 46, valine 47, arginine 49, serine 116, lysine 117, and asparagine 118 each contribute to the beta-D-glucose 6-phosphate site. Aspartate 170 contributes to the Mg(2+) binding site.

It belongs to the HAD-like hydrolase superfamily. CbbY/CbbZ/Gph/YieH family. As to quaternary structure, monomer. Requires Mg(2+) as cofactor. Autophosphorylated.

It localises to the cytoplasm. The enzyme catalyses beta-D-glucose 1-phosphate = beta-D-glucose 6-phosphate. Activated by phosphorylation. Competitively inhibited by alpha-D-galactose-1-phosphate. In terms of biological role, catalyzes the interconversion of D-glucose 1-phosphate (G1P) and D-glucose 6-phosphate (G6P), forming beta-D-glucose 1,6-(bis)phosphate (beta-G16P) as an intermediate. The beta-phosphoglucomutase (Beta-PGM) acts on the beta-C(1) anomer of G1P. Glucose or lactose are used in preference to maltose, which is only utilized after glucose or lactose has been exhausted. It plays a key role in the regulation of the flow of carbohydrate intermediates in glycolysis and the formation of the sugar nucleotide UDP-glucose. This Lactococcus lactis subsp. lactis (strain IL1403) (Streptococcus lactis) protein is Beta-phosphoglucomutase.